The following is a 137-amino-acid chain: Small ribosomal subunit protein uS12 (137 aa).

A disordered region spans residues 1-57; the sequence is MPTINQLVRKPRKSKTKQSDSPVLNRGFNSKKKQFTNLNSPQKRGVCTRVGTMTPRK. At D102 the chain carries 3-methylthioaspartic acid. Positions 118–137 are disordered; it reads SGVDGRRQGRSLYGTKKPKN.

The protein belongs to the universal ribosomal protein uS12 family. Part of the 30S ribosomal subunit. Contacts proteins S8 and S17. May interact with IF1 in the 30S initiation complex.

Functionally, with S4 and S5 plays an important role in translational accuracy. Its function is as follows. Interacts with and stabilizes bases of the 16S rRNA that are involved in tRNA selection in the A site and with the mRNA backbone. Located at the interface of the 30S and 50S subunits, it traverses the body of the 30S subunit contacting proteins on the other side and probably holding the rRNA structure together. The combined cluster of proteins S8, S12 and S17 appears to hold together the shoulder and platform of the 30S subunit. This is Small ribosomal subunit protein uS12 from Staphylococcus epidermidis (strain ATCC 12228 / FDA PCI 1200).